The primary structure comprises 582 residues: Phosphoribosylaminoimidazole carboxylase (582 aa).

Positions K114–L305 constitute an ATP-grasp domain. ATP is bound at residue A143–A200.

It in the C-terminal section; belongs to the AIR carboxylase family. Class I subfamily.

It carries out the reaction 5-amino-1-(5-phospho-D-ribosyl)imidazole-4-carboxylate + H(+) = 5-amino-1-(5-phospho-beta-D-ribosyl)imidazole + CO2. The protein operates within purine metabolism; IMP biosynthesis via de novo pathway; 5-amino-1-(5-phospho-D-ribosyl)imidazole-4-carboxylate from 5-amino-1-(5-phospho-D-ribosyl)imidazole (carboxylase route): step 1/1. This is Phosphoribosylaminoimidazole carboxylase (ADE2) from Cryptococcus neoformans var. grubii serotype A (strain H99 / ATCC 208821 / CBS 10515 / FGSC 9487) (Filobasidiella neoformans var. grubii).